The chain runs to 898 residues: Transportin-1 (898 aa).

Position 1 is an N-acetylmethionine (Met-1). HEAT repeat units follow at residues 19-46 (GLQQ…QKLE), 51-89 (YPDF…AHFQ), 98-131 (FIKS…KGEL), 137-174 (LLPK…LDSD), 181-211 (NIMI…QFII), 224-251 (FIEN…VMLL), 263-290 (HNIV…FWLT), 306-397 (PKLI…LANV), 405-433 (HILP…GAIA), 445-472 (PELI…TLSR), 486-519 (LKPL…EEEA), 527-560 (LAYI…ADSV), 568-606 (EYIQ…TALQ), 614-665 (EPVY…GLGG), 676-707 (ILTL…KACF), 715-748 (ADFM…IQMG), 756-791 (PMVL…YVCP), 799-832 (QQFI…ISVN), 841-872 (IFFC…KNQV), and 875-895 (ENWR…LAAF). The Importin N-terminal domain occupies 41-109 (VQQKLEQLNQ…KSECLNNIGD (69 aa)). Residues 347–374 (FHRSRTVAQQHDEDGIEEEDDDDDEIDD) form a disordered region. Positions 360-374 (DGIEEEDDDDDEIDD) are enriched in acidic residues.

This sequence belongs to the importin beta family. Importin beta-2 subfamily. As to quaternary structure, identified in a complex that contains TNPO1, RAN and RANBP1. Binds HNRPA1, HNRPA2, HNRNPDL, RPS7, RPL5 and RAN. Interacts with H2A, H2B, H3 and H4 histones. Interacts with isoform 1 and isoform 5 of ADAR/ADAR1 (via DRBM 3 domain). Interacts with SNAI1 (via zinc fingers); the interaction mediates SNAI1 nuclear import. Interacts with SNAI2 (via zinc fingers). Interacts with RPL23A (via BIB domain) and SRP19; this interaction is involved in RPL23A and SRP19 import into the nucleus. Interacts (via HEAT repeats 8-12) with BAP1 (via non-classical PY-NLS); this interaction is direct, is involved in BAP1 nuclear import and disrupts BAP1 homodimerization. In terms of assembly, (Microbial infection) Binds to HIV-1 Rev.

It is found in the cytoplasm. Its subcellular location is the nucleus. Functions in nuclear protein import as nuclear transport receptor. Serves as receptor for nuclear localization signals (NLS) in cargo substrates. May mediate docking of the importin/substrate complex to the nuclear pore complex (NPC) through binding to nucleoporin and the complex is subsequently translocated through the pore by an energy requiring, Ran-dependent mechanism. At the nucleoplasmic side of the NPC, Ran binds to the importin, the importin/substrate complex dissociates and importin is re-exported from the nucleus to the cytoplasm where GTP hydrolysis releases Ran. The directionality of nuclear import is thought to be conferred by an asymmetric distribution of the GTP- and GDP-bound forms of Ran between the cytoplasm and nucleus. Involved in nuclear import of M9-containing proteins. In vitro, binds directly to the M9 region of the heterogeneous nuclear ribonucleoproteins (hnRNP), A1 and A2 and mediates their nuclear import. Involved in hnRNP A1/A2 nuclear export. Mediates the nuclear import of ribosomal proteins RPL23A, RPS7 and RPL5. In vitro, mediates nuclear import of H2A, H2B, H3 and H4 histones. In vitro, mediates nuclear import of SRP19. Mediates nuclear import of ADAR/ADAR1 isoform 1 and isoform 5 in a RanGTP-dependent manner. Main mediator of PR-DUB complex component BAP1 nuclear import; acts redundantly with the karyopherins KPNA1 and KPNA2. In terms of biological role, (Microbial infection) In case of HIV-1 infection, binds and mediates the nuclear import of HIV-1 Rev. In Homo sapiens (Human), this protein is Transportin-1 (TNPO1).